Consider the following 135-residue polypeptide: Ribonuclease P protein component (135 aa).

Belongs to the RnpA family. As to quaternary structure, consists of a catalytic RNA component (M1 or rnpB) and a protein subunit.

It catalyses the reaction Endonucleolytic cleavage of RNA, removing 5'-extranucleotides from tRNA precursor.. In terms of biological role, RNaseP catalyzes the removal of the 5'-leader sequence from pre-tRNA to produce the mature 5'-terminus. It can also cleave other RNA substrates such as 4.5S RNA. The protein component plays an auxiliary but essential role in vivo by binding to the 5'-leader sequence and broadening the substrate specificity of the ribozyme. The sequence is that of Ribonuclease P protein component from Saccharophagus degradans (strain 2-40 / ATCC 43961 / DSM 17024).